Reading from the N-terminus, the 578-residue chain is MASEFSKKRKLKDAKIATEDGAATDKKTKKVKKDKKEKKAAEEVVEDATPEEENDAQKAEEQQDGDEVIPTGNGDKEDSDDKDAEAGDELTKTNDSLIAPSIATNATDFSELNLSDKTMKAIAEMGFTKMTEIQRRGIPPLLAGKDVLGAAKTGSGKTLAFLIPAIEMLSSLRFKPRNGTGAIVVTPTRELALQIFGVARELMKNHSQTYGVVIGGANRRAEAEKLGKGVNLLIATPGRLLDHLQNTPFVFKNMRSLIIDEADRILEIGFEDEMRQIIKILPKEDRQTMLFSATQTTKVEDLARISLRPGPLYVNVDEEKQFSTVEGLDQGYVVVDADKRFLLLFSFLKKMQKKKVIVFFSSCNSVKYYSELLQYIDLQVLDLHGKQKQQKRTNTFFEFCNAKQGTLICTDVAARGLDIPAVDWIVQFDPPDDPRDYIHRVGRTARGNNTKGRSLLFLQPNELGFLAHLKAAKVPVVEYDFPKSKILNVQSQLEKLIGQNYYLNQSAKDGYRSYLHAYASHSLRSVFDIHKLDLVKVAKSFGFSTPPRVDITLASSMSRDKKQTSRRAYGSQPKQNRH.

The disordered stretch occupies residues 1-91 (MASEFSKKRK…KDAEAGDELT (91 aa)). Over residues 13–26 (DAKIATEDGAATDK) the composition is skewed to basic and acidic residues. Over residues 27-36 (KTKKVKKDKK) the composition is skewed to basic residues. 2 stretches are compositionally biased toward acidic residues: residues 43–54 (EVVEDATPEEEN) and 77–88 (EDSDDKDAEAGD). Residues 107-135 (TDFSELNLSDKTMKAIAEMGFTKMTEIQR) carry the Q motif motif. Residues 138-313 (IPPLLAGKDV…RISLRPGPLY (176 aa)) form the Helicase ATP-binding domain. 151-158 (AKTGSGKT) is an ATP binding site. Positions 260–263 (DEAD) match the DEAD box motif. The short motif at 339 to 355 (KRFLLLFSFLKKMQKKK) is the Bipartite nuclear localization signal element. In terms of domain architecture, Helicase C-terminal spans 343-497 (LLFSFLKKMQ…NVQSQLEKLI (155 aa)). Residues 556–578 (SMSRDKKQTSRRAYGSQPKQNRH) form a disordered region.

It belongs to the DEAD box helicase family. DDX18/HAS1 subfamily. In terms of assembly, associates in the nucleolus with the 60S and pre-60S ribosomal subunits.

It is found in the nucleus. It localises to the nucleolus. It carries out the reaction ATP + H2O = ADP + phosphate + H(+). Its function is as follows. ATP-dependent RNA helicase involved in 40S ribosomal subunit biogenesis. Required for the processing and cleavage of 35S pre-rRNA at sites A0, A1, and A2, leading to mature 18S rRNA. This is ATP-dependent RNA helicase has-1 (has-1) from Neurospora crassa (strain ATCC 24698 / 74-OR23-1A / CBS 708.71 / DSM 1257 / FGSC 987).